Here is a 254-residue protein sequence, read N- to C-terminus: Protein Thf1 (254 aa).

The stretch at 183-217 (SDKLQKDLDLYRSNLEKMEQARITMEEAIQADRRK) forms a coiled coil. Basic and acidic residues predominate over residues 213–227 (ADRRKREQREQEKLA). Residues 213 to 254 (ADRRKREQREQEKLAKAAAAEAPAALEASSDNPEPETSETPS) are disordered. Low complexity predominate over residues 228 to 240 (KAAAAEAPAALEA). The span at 245 to 254 (PEPETSETPS) shows a compositional bias: acidic residues.

The protein belongs to the THF1 family.

In terms of biological role, may be involved in photosynthetic membrane biogenesis. The protein is Protein Thf1 of Synechococcus elongatus (strain ATCC 33912 / PCC 7942 / FACHB-805) (Anacystis nidulans R2).